Reading from the N-terminus, the 239-residue chain is Large ribosomal subunit protein uL1 (239 aa).

The protein belongs to the universal ribosomal protein uL1 family. Part of the 50S ribosomal subunit.

Functionally, binds directly to 23S rRNA. The L1 stalk is quite mobile in the ribosome, and is involved in E site tRNA release. Protein L1 is also a translational repressor protein, it controls the translation of the L11 operon by binding to its mRNA. The protein is Large ribosomal subunit protein uL1 of Rickettsia akari (strain Hartford).